Here is a 681-residue protein sequence, read N- to C-terminus: NAD(P)H-quinone oxidoreductase chain 5 (681 aa).

16 helical membrane-spanning segments follow: residues Leu-7–Ile-27, Ile-39–Leu-59, Ile-89–Ile-109, Gly-120–Ile-140, Leu-144–Phe-164, Gly-188–Ile-208, Gly-219–Ala-239, Thr-258–Ala-278, Val-289–Ala-309, Leu-327–Met-347, Phe-352–Gly-372, Ala-395–Trp-415, Ile-420–Gly-440, Leu-509–Gly-529, Phe-558–Leu-578, and Ala-660–Leu-680.

It belongs to the complex I subunit 5 family.

It localises to the cell membrane. It carries out the reaction a plastoquinone + NADH + (n+1) H(+)(in) = a plastoquinol + NAD(+) + n H(+)(out). The catalysed reaction is a plastoquinone + NADPH + (n+1) H(+)(in) = a plastoquinol + NADP(+) + n H(+)(out). Its function is as follows. NDH-1 shuttles electrons from NAD(P)H, via FMN and iron-sulfur (Fe-S) centers, to quinones in the respiratory chain. The immediate electron acceptor for the enzyme in this species is believed to be plastoquinone. Couples the redox reaction to proton translocation (for every two electrons transferred, four hydrogen ions are translocated across the cytoplasmic membrane), and thus conserves the redox energy in a proton gradient. The protein is NAD(P)H-quinone oxidoreductase chain 5 (ndhF) of Synechocystis sp. (strain ATCC 27184 / PCC 6803 / Kazusa).